A 358-amino-acid polypeptide reads, in one-letter code: Alanine racemase (358 aa).

Catalysis depends on K35, which acts as the Proton acceptor; specific for D-alanine. N6-(pyridoxal phosphate)lysine is present on K35. Residue R130 participates in substrate binding. Y255 acts as the Proton acceptor; specific for L-alanine in catalysis. M303 provides a ligand contact to substrate.

Belongs to the alanine racemase family. It depends on pyridoxal 5'-phosphate as a cofactor.

The enzyme catalyses L-alanine = D-alanine. Its pathway is amino-acid biosynthesis; D-alanine biosynthesis; D-alanine from L-alanine: step 1/1. Functionally, catalyzes the interconversion of L-alanine and D-alanine. May also act on other amino acids. This is Alanine racemase (alr) from Shewanella sp. (strain W3-18-1).